Consider the following 493-residue polypeptide: UDP-N-acetylmuramoyl-L-alanyl-D-glutamate--2,6-diaminopimelate ligase (493 aa).

Position 30 (Ser-30) interacts with UDP-N-acetyl-alpha-D-muramoyl-L-alanyl-D-glutamate. An ATP-binding site is contributed by 114-120 (GTNGKTS). UDP-N-acetyl-alpha-D-muramoyl-L-alanyl-D-glutamate is bound by residues 156–157 (TT), Ser-183, Gln-189, and Arg-191. The residue at position 223 (Lys-223) is an N6-carboxylysine. Meso-2,6-diaminopimelate-binding positions include Arg-386, 410–413 (DNPR), Gly-460, and Glu-464. The Meso-diaminopimelate recognition motif motif lies at 410 to 413 (DNPR).

This sequence belongs to the MurCDEF family. MurE subfamily. Mg(2+) is required as a cofactor. Post-translationally, carboxylation is probably crucial for Mg(2+) binding and, consequently, for the gamma-phosphate positioning of ATP.

The protein resides in the cytoplasm. It carries out the reaction UDP-N-acetyl-alpha-D-muramoyl-L-alanyl-D-glutamate + meso-2,6-diaminopimelate + ATP = UDP-N-acetyl-alpha-D-muramoyl-L-alanyl-gamma-D-glutamyl-meso-2,6-diaminopimelate + ADP + phosphate + H(+). It participates in cell wall biogenesis; peptidoglycan biosynthesis. Its function is as follows. Catalyzes the addition of meso-diaminopimelic acid to the nucleotide precursor UDP-N-acetylmuramoyl-L-alanyl-D-glutamate (UMAG) in the biosynthesis of bacterial cell-wall peptidoglycan. The polypeptide is UDP-N-acetylmuramoyl-L-alanyl-D-glutamate--2,6-diaminopimelate ligase (Chromobacterium violaceum (strain ATCC 12472 / DSM 30191 / JCM 1249 / CCUG 213 / NBRC 12614 / NCIMB 9131 / NCTC 9757 / MK)).